Here is an 875-residue protein sequence, read N- to C-terminus: Cell surface glycoprotein (875 aa).

The N-terminal stretch at 1–23 (MTNTKQKINAVFLSALMVMSVFA) is a signal peptide. Residues 137-157 (EVQNGGSGDVTGSTLQTSSSG) show a composition bias toward polar residues. 2 disordered regions span residues 137–158 (EVQN…SSGP) and 197–217 (LPTA…DFDV). The segment covering 205–216 (DNGASGSNGDFD) has biased composition (low complexity). Asn-253 is a glycosylation site (N-linked (GlcNAc...) asparagine). A disordered region spans residues 380-414 (YPASDSSNDGYASGGSHASSVTVRDTDGDGTDDSE). The span at 383–402 (SDSSNDGYASGGSHASSVTV) shows a compositional bias: polar residues. 4 N-linked (GlcNAc...) asparagine glycosylation sites follow: Asn-455, Asn-563, Asn-715, and Asn-774. Residues 794 to 852 (EAGSLEEEQPDTETPEPDTETPEPDTETPEPDTETPEPDTETPEPDTETEEATTEASGP) are disordered. Residues 797–846 (SLEEEQPDTETPEPDTETPEPDTETPEPDTETPEPDTETPEPDTETEEAT) are compositionally biased toward acidic residues. The helical transmembrane segment at 851–875 (GPGFTAAIALIALVAAALLAVRRDN) threads the bilayer. A PGF sorting signal motif is present at residues 852 to 854 (PGF).

Belongs to the halobacterial S-layer protein family. In terms of processing, asn-455 is glycosylated by a pentasaccharide comprising a hexose, 2 hexuronic acids, a methyl ester of a hexuronic acid and a final hexose. The complete pentasaccharide is first assembled on dolichol phosphate and then transferred the glycan to the target Asn. Post-translationally, cleaved by the archaeosortase ArtA at the C-terminus, with removal of a short hydrophobic segment. Lipidation.

It is found in the secreted. The protein resides in the cell wall. Its subcellular location is the S-layer. It localises to the cell membrane. S-layer protein. The S-layer is a paracrystalline mono-layered assembly of proteins which coat the surface of the cell. The polypeptide is Cell surface glycoprotein (csg1) (Haloarcula marismortui (strain ATCC 43049 / DSM 3752 / JCM 8966 / VKM B-1809) (Halobacterium marismortui)).